The primary structure comprises 223 residues: Ribosomal RNA small subunit methyltransferase G (223 aa).

S-adenosyl-L-methionine contacts are provided by residues glycine 83, leucine 88, alanine 134–glutamate 135, and arginine 152.

It belongs to the methyltransferase superfamily. RNA methyltransferase RsmG family.

The protein resides in the cytoplasm. Specifically methylates the N7 position of guanine in position 518 of 16S rRNA. This Corynebacterium diphtheriae (strain ATCC 700971 / NCTC 13129 / Biotype gravis) protein is Ribosomal RNA small subunit methyltransferase G.